Here is a 411-residue protein sequence, read N- to C-terminus: MLTVLAALSLLSLLTSATGRLAPDELCYAEPRRTGSPPNTQPERPPVIFEPPTIAIKAESKGCELILLDPPIDVSYRREDKVNASIAWFFDFGACRMPIAYREYYGCIGNAVPSPETCDAYSFTLIRTEGIVEFTIVNMSLLFQPGIYDSGNFIYSVLLDYHIFTGRVTLEVEKDTNYPCGMIHGLTAYGNINVDETMDNASPHPRAVGCFPEPIDNEAWANVTFTELGIPDPNSFLDDEGDYPNISDCHSWESYTYPNTLRQATGPQTLLVGAVGLRILAQAWKFVGDETYDTIRAEAKNLETHVPSSAAESSLENQSTQEESNSPEVAHLRSVNSDDSTHTGGASNGIQDCDSQLKTVYACLALIGLGTCAMIGLIVYICVLRSKLSSRNFSRAQNVKHRNYQRLEYVA.

Positions 1–19 (MLTVLAALSLLSLLTSATG) are cleaved as a signal peptide. Asn83, Asn138, Asn222, Asn245, and Asn317 each carry an N-linked (GlcNAc...) asparagine; by host glycan. 2 stretches are compositionally biased toward polar residues: residues 306 to 327 (VPSS…SNSP) and 334 to 345 (SVNSDDSTHTGG). The segment at 306-345 (VPSSAAESSLENQSTQEESNSPEVAHLRSVNSDDSTHTGG) is disordered. The chain crosses the membrane as a helical span at residues 363-379 (CLALIGLGTCAMIGLIV). A glycan (N-linked (GlcNAc...) asparagine; by host) is linked at Asn392.

Belongs to the alphaherpesvirinae glycoprotein G family.

It localises to the virion membrane. Chemokine-binding protein that inhibits neutrophils' chemotaxis. The polypeptide is Envelope glycoprotein G (gG) (Equus caballus (Horse)).